A 98-amino-acid chain; its full sequence is NADH-ubiquinone oxidoreductase chain 4L (98 aa).

Transmembrane regions (helical) follow at residues 2 to 22, 29 to 49, and 61 to 81; these read PSIS…MLIF, SLLC…LTIL, and ILLL…LVTV.

The protein belongs to the complex I subunit 4L family. Core subunit of respiratory chain NADH dehydrogenase (Complex I) which is composed of 45 different subunits.

The protein resides in the mitochondrion inner membrane. The enzyme catalyses a ubiquinone + NADH + 5 H(+)(in) = a ubiquinol + NAD(+) + 4 H(+)(out). Its function is as follows. Core subunit of the mitochondrial membrane respiratory chain NADH dehydrogenase (Complex I) which catalyzes electron transfer from NADH through the respiratory chain, using ubiquinone as an electron acceptor. Part of the enzyme membrane arm which is embedded in the lipid bilayer and involved in proton translocation. This Eulemur rubriventer (Red-bellied lemur) protein is NADH-ubiquinone oxidoreductase chain 4L (MT-ND4L).